The sequence spans 164 residues: Phosphopantetheine adenylyltransferase (164 aa).

Serine 9 is a binding site for substrate. ATP contacts are provided by residues serine 9–phenylalanine 10 and histidine 17. 3 residues coordinate substrate: lysine 41, leucine 73, and lysine 87. ATP-binding positions include glycine 88–arginine 90, glutamate 98, and asparagine 123–serine 129.

The protein belongs to the bacterial CoaD family. Homohexamer. Requires Mg(2+) as cofactor.

The protein localises to the cytoplasm. It catalyses the reaction (R)-4'-phosphopantetheine + ATP + H(+) = 3'-dephospho-CoA + diphosphate. Its pathway is cofactor biosynthesis; coenzyme A biosynthesis; CoA from (R)-pantothenate: step 4/5. Its function is as follows. Reversibly transfers an adenylyl group from ATP to 4'-phosphopantetheine, yielding dephospho-CoA (dPCoA) and pyrophosphate. The protein is Phosphopantetheine adenylyltransferase of Clostridium kluyveri (strain ATCC 8527 / DSM 555 / NBRC 12016 / NCIMB 10680 / K1).